A 714-amino-acid chain; its full sequence is Calpain-1 catalytic subunit (714 aa).

The residue at position 2 (Ser2) is an N-acetylserine. Residues 55–354 (LFRDEAFPPV…FTRLEICNLT (300 aa)) enclose the Calpain catalytic domain. 2 residues coordinate Ca(2+): Gln109 and Asp114. Residues Cys115, His272, and Asn296 contribute to the active site. 3 residues coordinate Ca(2+): Asn316, Asp318, and Asp323. Residue Thr354 is modified to Phosphothreonine. The segment at 355–526 (PDALKSRTIR…KSAGTVELDD (172 aa)) is domain III. The segment at 527–542 (QIQANLPDEQVLSEEE) is linker. EF-hand domains follow at residues 541 to 576 (EEID…IISK), 585 to 618 (FSLE…NRIR), 615 to 650 (NRIR…AGFK), and 680 to 714 (VRLE…TMFA). The segment at 543–713 (IDENFKALFR…LFKWLQLTMF (171 aa)) is domain IV. Ca(2+)-binding residues include Asp598, Asp600, Asn602, Lys604, Glu609, Asp628, Asp630, Ser632, Ser634, and Glu639.

It belongs to the peptidase C2 family. As to quaternary structure, forms a heterodimer with a small (regulatory) subunit CAPNS1. Ca(2+) serves as cofactor. In terms of processing, undergoes calcium-induced successive autoproteolytic cleavages that generate a membrane-bound 78 kDa active form and an intracellular 75 kDa active form. Calpastatin reduces with high efficiency the transition from 78 kDa to 75 kDa calpain forms. As to expression, ubiquitous.

It is found in the cytoplasm. The protein localises to the cell membrane. It catalyses the reaction Broad endopeptidase specificity.. Activated by micromolar concentrations of calcium and inhibited by calpastatin. Its function is as follows. Calcium-regulated non-lysosomal thiol-protease which catalyzes limited proteolysis of substrates involved in cytoskeletal remodeling and signal transduction. Proteolytically cleaves CTBP1 at 'Asn-375', 'Gly-387' and 'His-409'. Cleaves and activates caspase-7 (CASP7). This Homo sapiens (Human) protein is Calpain-1 catalytic subunit.